We begin with the raw amino-acid sequence, 237 residues long: Lectin alpha chain (237 aa).

The Mn(2+) site is built by glutamate 8 and aspartate 10. The Ca(2+) site is built by aspartate 10, tyrosine 12, asparagine 14, and aspartate 19. Tyrosine 12 contacts a carbohydrate. Aspartate 19 and histidine 24 together coordinate Mn(2+). 99–100 serves as a coordination point for a carbohydrate; that stretch reads LY. Aspartate 208 serves as a coordination point for Ca(2+). Arginine 228 contacts a carbohydrate.

The protein belongs to the leguminous lectin family. Equilibrium between homodimer and homotetramer. Oligomerization is pH-dependent with homotetramers forming at pH 6.5 and above. Post-translationally, the beta and gamma chains are produced by partial proteolytic processing of the lectin alpha chain by an asparaginyl endopeptidase. Mixture of 60% alpha lectin and 40% of its beta and gamma proteolytic fragments. Seed.

It is found in the vacuole. It localises to the aleurone grain. D-mannose/D-glucose-binding lectin. Has anti-inflammatory activity in rats. Induces histamine release in mast cells from hamster and rat. Induces lymphocyte proliferation and IFNG production. Shows toxicity against the aquatic snail B.glabrata at concentrations higher than 20 ug/ml. This chain is Lectin alpha chain, found in Dioclea virgata.